The sequence spans 331 residues: Probable endo-beta-1,4-glucanase B (331 aa).

The signal sequence occupies residues 1-18 (MKFQSTLLLAAAAGSALA). N38 and N100 each carry an N-linked (GlcNAc...) asparagine glycan. E160 acts as the Proton donor in catalysis. N211 carries an N-linked (GlcNAc...) asparagine glycan. The active-site Nucleophile is the E266. N288 carries an N-linked (GlcNAc...) asparagine glycan.

This sequence belongs to the glycosyl hydrolase 5 (cellulase A) family.

It localises to the secreted. It catalyses the reaction Endohydrolysis of (1-&gt;4)-beta-D-glucosidic linkages in cellulose, lichenin and cereal beta-D-glucans.. In terms of biological role, has endoglucanase activity on substrates containing beta-1,4 glycosidic bonds, like in carboxymethylcellulose (CMC), hydroxyethylcellulose (HEC) and beta-glucan. Involved in the degradation of complex natural cellulosic substrates. The chain is Probable endo-beta-1,4-glucanase B (eglB) from Aspergillus niger (strain ATCC MYA-4892 / CBS 513.88 / FGSC A1513).